The sequence spans 381 residues: Alkanesulfonate monooxygenase (381 aa).

Belongs to the SsuD family. As to quaternary structure, homotetramer.

It catalyses the reaction an alkanesulfonate + FMNH2 + O2 = an aldehyde + FMN + sulfite + H2O + 2 H(+). Its function is as follows. Catalyzes the desulfonation of aliphatic sulfonates. This is Alkanesulfonate monooxygenase from Escherichia coli O1:K1 / APEC.